A 424-amino-acid chain; its full sequence is Otefin (424 aa).

In terms of domain architecture, LEM spans 1–30 (MADVDDFDSLSNAELRAKMLAQGLPNIPVT). The segment at 1–50 (MADVDDFDSLSNAELRAKMLAQGLPNIPVTDSSRKVLVKRLRASIGGQAS) is required for binding to Med and germline stem cell maintenance. The interval 42–186 (RASIGGQASP…SSKRADREEN (145 aa)) is disordered. Phosphoserine is present on residues S44, S50, and S54. T63 bears the Phosphothreonine mark. Over residues 65-80 (APAPGAPSAPAAASTP) the composition is skewed to low complexity. Residues 92–99 (ATKARRTI) carry the Nuclear localization signal motif. The span at 103 to 133 (EAKEPVRRLPEEAIRRRPDEADRLRSEEPVA) shows a compositional bias: basic and acidic residues. The residue at position 152 (S152) is a Phosphoserine. Over residues 157–170 (SERKVVEPLRKPET) the composition is skewed to basic and acidic residues. Phosphoserine occurs at positions 192 and 198. The tract at residues 259–278 (PSVPSARAQTTSSTRSYDYA) is disordered. Over residues 262–274 (PSARAQTTSSTRS) the composition is skewed to low complexity. Positions 271-400 (STRSYDYASN…NRWLNSLEQK (130 aa)) are required for binding to Med. S321 is modified (phosphoserine). At T324 the chain carries Phosphothreonine. S326 is modified (phosphoserine). T358 is subject to Phosphothreonine. S378 and S385 each carry phosphoserine. An essential for nuclear membrane localization and germline stem cell maintenance region spans residues 400-424 (KYHIKSKLFIVLLVLLLIGVYYIFY). The interval 406 to 424 (KLFIVLLVLLLIGVYYIFY) is essential for nuclear membrane localization.

As to quaternary structure, interacts with Med. Interacts with Lam. Interacts with aurA, alphaTub84B, gammaTub23C and gammaTub37C. Interacts with Nemp. Post-translationally, phosphorylation at Thr-63 by aurA may be required for exit from mitosis. May be phosphorylated by Cdk1 and Pka-C1. In terms of tissue distribution, expressed in all cell types of the germarium and testis. Expressed in nurse cells, follicle cells and oocytes.

It localises to the nucleus inner membrane. It is found in the nucleus. The protein localises to the nucleoplasm. Its subcellular location is the cytoplasm. The protein resides in the chromosome. It localises to the cytoskeleton. It is found in the spindle pole. The protein localises to the microtubule organizing center. Its subcellular location is the centrosome. Functionally, inner nuclear membrane protein. Involved in the attachment of membrane vesicles to chromatin during nuclear assembly, and is probably required for centrosome maturation and cell cycle progression during mitosis. Essential for differentiation of certain tissues and the maintenance of progenitor cell populations. Required for the differentiation and maintenance of male and female germline stem cells (GSCs), as well as the maintenance of somatic cells in the GSC niche. This role is likely to be independent of the BMP (Dpp) pathway that negatively regulates bam transcription during GSC differentiation. During development, plays essential and redundant functions with the other LEM domain proteins; bocks and MAN1. Also has a redundant but important role with bocks during larval development. This is Otefin from Drosophila melanogaster (Fruit fly).